The primary structure comprises 427 residues: tRNA(Ile)-lysidine synthase (427 aa).

27-32 (SGGVDS) provides a ligand contact to ATP.

The protein belongs to the tRNA(Ile)-lysidine synthase family.

The protein resides in the cytoplasm. The catalysed reaction is cytidine(34) in tRNA(Ile2) + L-lysine + ATP = lysidine(34) in tRNA(Ile2) + AMP + diphosphate + H(+). Its function is as follows. Ligates lysine onto the cytidine present at position 34 of the AUA codon-specific tRNA(Ile) that contains the anticodon CAU, in an ATP-dependent manner. Cytidine is converted to lysidine, thus changing the amino acid specificity of the tRNA from methionine to isoleucine. In Streptococcus equi subsp. equi (strain 4047), this protein is tRNA(Ile)-lysidine synthase.